We begin with the raw amino-acid sequence, 210 residues long: MTTTPGTLYIISAPSGAGKTSLVKALLQTGIDLSLSISYTSRQPRPEEMDGRDYHFVTRQVFEQKLQEDEFLESAELYGNFYGTSKKWINETMTSGRDILLEIDSQGARQVRAVFPVAVGIFVLPPSLEVLEMRLRQRAQDSLEAISRRLAAAREELSHAGEYNYIIINDKLDRALQDLKCIIQAERLKTAKQLVRHHGLLAQLTRTSVL.

A Guanylate kinase-like domain is found at 6 to 184; the sequence is GTLYIISAPS…ALQDLKCIIQ (179 aa). 13 to 20 contacts ATP; the sequence is APSGAGKT.

It belongs to the guanylate kinase family.

The protein localises to the cytoplasm. It carries out the reaction GMP + ATP = GDP + ADP. In terms of biological role, essential for recycling GMP and indirectly, cGMP. This is Guanylate kinase from Nitrosospira multiformis (strain ATCC 25196 / NCIMB 11849 / C 71).